A 20-amino-acid polypeptide reads, in one-letter code: Toxin CpTx-4a (20 aa).

The protein belongs to the spider toxin CSTX family. Expressed by the venom gland.

The protein localises to the secreted. Functionally, spider venom toxin that exhibits cytolytic activity by forming an alpha-helix across the membrane. Lethal to insect larvae. This Cheiracanthium punctorium (Yellow sac spider) protein is Toxin CpTx-4a.